We begin with the raw amino-acid sequence, 654 residues long: uncharacterized protein (654 aa).

Residues 1–13 (MSNLILTPSNNGT) are compositionally biased toward polar residues. The tract at residues 1 to 23 (MSNLILTPSNNGTERPYRSRKTR) is disordered. Positions 25–54 (CDNCRLRKSRCVVESIGNPCLLCTQLKIPC) form a DNA-binding region, zn(2)-C6 fungal-type. The segment at 63–96 (RNKQKKQQDSVSDDTPSEATTTTNDDRDPKYNAL) is disordered.

It localises to the cytoplasm. Its subcellular location is the nucleus. This is an uncharacterized protein from Schizosaccharomyces pombe (strain 972 / ATCC 24843) (Fission yeast).